The sequence spans 240 residues: ATP-dependent dethiobiotin synthetase BioD (240 aa).

15–20 (EIGKTF) contacts ATP. Thr-19 is a binding site for Mg(2+). Residue Lys-40 is part of the active site. ATP contacts are provided by residues Asp-57, 118–121 (EGVG), and 178–179 (NR). Positions 57 and 118 each coordinate Mg(2+).

Belongs to the dethiobiotin synthetase family. Homodimer. Mg(2+) is required as a cofactor.

Its subcellular location is the cytoplasm. It carries out the reaction (7R,8S)-7,8-diammoniononanoate + CO2 + ATP = (4R,5S)-dethiobiotin + ADP + phosphate + 3 H(+). The protein operates within cofactor biosynthesis; biotin biosynthesis; biotin from 7,8-diaminononanoate: step 1/2. In terms of biological role, catalyzes a mechanistically unusual reaction, the ATP-dependent insertion of CO2 between the N7 and N8 nitrogen atoms of 7,8-diaminopelargonic acid (DAPA, also called 7,8-diammoniononanoate) to form a ureido ring. This Burkholderia pseudomallei (strain K96243) protein is ATP-dependent dethiobiotin synthetase BioD.